We begin with the raw amino-acid sequence, 1417 residues long: DNA-directed RNA polymerase subunit beta' (1417 aa).

Zn(2+) contacts are provided by C71, C73, C86, and C89. The Mg(2+) site is built by D461, D463, and D465. Positions 815, 889, 896, and 899 each coordinate Zn(2+).

It belongs to the RNA polymerase beta' chain family. The RNAP catalytic core consists of 2 alpha, 1 beta, 1 beta' and 1 omega subunit. When a sigma factor is associated with the core the holoenzyme is formed, which can initiate transcription. Mg(2+) is required as a cofactor. Zn(2+) serves as cofactor.

It catalyses the reaction RNA(n) + a ribonucleoside 5'-triphosphate = RNA(n+1) + diphosphate. In terms of biological role, DNA-dependent RNA polymerase catalyzes the transcription of DNA into RNA using the four ribonucleoside triphosphates as substrates. The chain is DNA-directed RNA polymerase subunit beta' from Pasteurella multocida (strain Pm70).